A 79-amino-acid chain; its full sequence is Succinate dehydrogenase assembly factor 1, mitochondrial (79 aa).

This sequence belongs to the complex I LYR family. SDHAF1 subfamily. As to quaternary structure, interacts with SDH2 within an SDH1-SDH2 subcomplex.

It is found in the mitochondrion matrix. Plays an essential role in the assembly of succinate dehydrogenase (SDH), an enzyme complex (also referred to as respiratory complex II) that is a component of both the tricarboxylic acid (TCA) cycle and the mitochondrial electron transport chain, and which couples the oxidation of succinate to fumarate with the reduction of ubiquinone (coenzyme Q) to ubiquinol. Promotes maturation of the iron-sulfur protein subunit SDH2 of the SDH catalytic dimer, protecting it from the deleterious effects of oxidants. Acts together with SDHAF3 (SDH7). The chain is Succinate dehydrogenase assembly factor 1, mitochondrial from Saccharomyces cerevisiae (strain YJM789) (Baker's yeast).